The chain runs to 160 residues: Phosphopantetheine adenylyltransferase (160 aa).

A substrate-binding site is contributed by Ser-10. ATP is bound by residues Ser-10–Phe-11 and His-18. 3 residues coordinate substrate: Lys-42, Leu-74, and Arg-88. Residues Gly-89 to Arg-91, Glu-99, and Tyr-124 to Ser-130 each bind ATP.

This sequence belongs to the bacterial CoaD family. As to quaternary structure, homohexamer. Requires Mg(2+) as cofactor.

The protein resides in the cytoplasm. It catalyses the reaction (R)-4'-phosphopantetheine + ATP + H(+) = 3'-dephospho-CoA + diphosphate. The protein operates within cofactor biosynthesis; coenzyme A biosynthesis; CoA from (R)-pantothenate: step 4/5. Functionally, reversibly transfers an adenylyl group from ATP to 4'-phosphopantetheine, yielding dephospho-CoA (dPCoA) and pyrophosphate. This chain is Phosphopantetheine adenylyltransferase, found in Bacillus pumilus (strain SAFR-032).